Consider the following 223-residue polypeptide: Endo-1,4-beta-xylanase 2 (223 aa).

An N-terminal signal peptide occupies residues 1-19 (MVSFTSLLAGVAAISGVLA). Residues 20-33 (APAAEVESVAVEKR) constitute a propeptide that is removed on maturation. Residue Q34 is modified to Pyrrolidone carboxylic acid. One can recognise a GH11 domain in the interval 34–222 (QTIQPGTGYN…FSSGSASITV (189 aa)). N-linked (GlcNAc...) asparagine glycans are attached at residues N71 and N94. Residues Y106 and Y110 each contribute to the substrate site. The Nucleophile role is filled by E119. Y121, R155, P159, Q169, and Y204 together coordinate substrate. Catalysis depends on E210, which acts as the Proton donor.

This sequence belongs to the glycosyl hydrolase 11 (cellulase G) family.

It localises to the secreted. It catalyses the reaction Endohydrolysis of (1-&gt;4)-beta-D-xylosidic linkages in xylans.. It functions in the pathway glycan degradation; xylan degradation. Functionally, glycoside hydrolase involved in the hydrolysis of xylan, a major plant cell wall hemicellulose made up of 1,4-beta-linked D-xylopyranose residues. Catalyzes the endohydrolysis of the main-chain 1,4-beta-glycosidic bonds connecting the xylose subunits yielding various xylooligosaccharides and xylose. The catalysis proceeds by a double-displacement reaction mechanism with a putative covalent glycosyl-enzyme intermediate, with retention of the anomeric configuration. Produces xylobiose and xylose as the main degradation products. The sequence is that of Endo-1,4-beta-xylanase 2 from Hypocrea jecorina (strain ATCC 56765 / BCRC 32924 / NRRL 11460 / Rut C-30) (Trichoderma reesei).